Reading from the N-terminus, the 726-residue chain is Catalase-peroxidase (726 aa).

The segment covering 1–13 has biased composition (polar residues); the sequence is MSMSEETNNSLSS. A disordered region spans residues 1–34; sequence MSMSEETNNSLSSGKCPFHHGGSDQSAGEGTGSR. Positions 105 to 226 form a cross-link, tryptophyl-tyrosyl-methioninium (Trp-Tyr) (with M-252); the sequence is WHGAGTYRSV…LAATEMGLIY (122 aa). The active-site Proton acceptor is His106. Positions 226–252 form a cross-link, tryptophyl-tyrosyl-methioninium (Tyr-Met) (with W-105); sequence YVNPEGPNASGEPLSAAAAIRATFGNM. Heme b is bound at residue His267.

The protein belongs to the peroxidase family. Peroxidase/catalase subfamily. In terms of assembly, homodimer or homotetramer. Heme b is required as a cofactor. Formation of the three residue Trp-Tyr-Met cross-link is important for the catalase, but not the peroxidase activity of the enzyme.

It carries out the reaction H2O2 + AH2 = A + 2 H2O. It catalyses the reaction 2 H2O2 = O2 + 2 H2O. Its function is as follows. Bifunctional enzyme with both catalase and broad-spectrum peroxidase activity. The chain is Catalase-peroxidase from Enterobacter sp. (strain 638).